A 161-amino-acid polypeptide reads, in one-letter code: Nucleotide-binding protein RSc2549 (161 aa).

This sequence belongs to the YajQ family.

Nucleotide-binding protein. The polypeptide is Nucleotide-binding protein RSc2549 (Ralstonia nicotianae (strain ATCC BAA-1114 / GMI1000) (Ralstonia solanacearum)).